Reading from the N-terminus, the 209-residue chain is Large ribosomal subunit protein uL3 (209 aa).

N5-methylglutamine is present on Gln150.

This sequence belongs to the universal ribosomal protein uL3 family. Part of the 50S ribosomal subunit. Forms a cluster with proteins L14 and L19. In terms of processing, methylated by PrmB.

One of the primary rRNA binding proteins, it binds directly near the 3'-end of the 23S rRNA, where it nucleates assembly of the 50S subunit. This Vibrio campbellii (strain ATCC BAA-1116) protein is Large ribosomal subunit protein uL3.